A 288-amino-acid chain; its full sequence is Elongation factor Ts (288 aa).

The segment at 80-83 is involved in Mg(2+) ion dislocation from EF-Tu; the sequence is TDFL.

The protein belongs to the EF-Ts family.

It localises to the cytoplasm. Its function is as follows. Associates with the EF-Tu.GDP complex and induces the exchange of GDP to GTP. It remains bound to the aminoacyl-tRNA.EF-Tu.GTP complex up to the GTP hydrolysis stage on the ribosome. This chain is Elongation factor Ts, found in Pseudomonas fluorescens (strain ATCC BAA-477 / NRRL B-23932 / Pf-5).